The following is a 320-amino-acid chain: Probable cell division protein WhiA (320 aa).

Positions 282–315 form a DNA-binding region, H-T-H motif; that stretch reads TLKELGEMLSPAIGKSGVNHRLRKIDEIATKLQE.

The protein belongs to the WhiA family.

Involved in cell division and chromosome segregation. This chain is Probable cell division protein WhiA, found in Alkaliphilus oremlandii (strain OhILAs) (Clostridium oremlandii (strain OhILAs)).